We begin with the raw amino-acid sequence, 180 residues long: Sperm protein associated with the nucleus on the X chromosome N2 (180 aa).

Disordered regions lie at residues 1–46 and 64–180; these read MEQP…KTKT and NSNQ…GGED. A compositionally biased stretch (basic and acidic residues) spans 10 to 26; sequence GEKRKSPCESNNKKNDE. Residues 82 to 169 show a composition bias toward acidic residues; it reads QEEEDEGLDS…SSQEDEDLDS (88 aa). Low complexity predominate over residues 170 to 180; sequence SEGSSQEGGED.

Belongs to the SPAN-X family.

This chain is Sperm protein associated with the nucleus on the X chromosome N2 (SPANXN2), found in Homo sapiens (Human).